A 431-amino-acid chain; its full sequence is Enolase (431 aa).

Q167 serves as a coordination point for (2R)-2-phosphoglycerate. Residue E209 is the Proton donor of the active site. 3 residues coordinate Mg(2+): D246, E289, and D316. 4 residues coordinate (2R)-2-phosphoglycerate: K341, R370, S371, and K392. Catalysis depends on K341, which acts as the Proton acceptor.

It belongs to the enolase family. In terms of assembly, component of the RNA degradosome, a multiprotein complex involved in RNA processing and mRNA degradation. The cofactor is Mg(2+).

The protein localises to the cytoplasm. It localises to the secreted. The protein resides in the cell surface. It carries out the reaction (2R)-2-phosphoglycerate = phosphoenolpyruvate + H2O. It functions in the pathway carbohydrate degradation; glycolysis; pyruvate from D-glyceraldehyde 3-phosphate: step 4/5. Functionally, catalyzes the reversible conversion of 2-phosphoglycerate (2-PG) into phosphoenolpyruvate (PEP). It is essential for the degradation of carbohydrates via glycolysis. This Chromohalobacter salexigens (strain ATCC BAA-138 / DSM 3043 / CIP 106854 / NCIMB 13768 / 1H11) protein is Enolase.